The following is a 313-amino-acid chain: D-alanine--D-alanine ligase (313 aa).

Residues K104–A304 form the ATP-grasp domain. Residue P130 to T187 participates in ATP binding. Mg(2+)-binding residues include D255, E271, and N273.

Belongs to the D-alanine--D-alanine ligase family. It depends on Mg(2+) as a cofactor. Mn(2+) serves as cofactor.

The protein localises to the cytoplasm. The catalysed reaction is 2 D-alanine + ATP = D-alanyl-D-alanine + ADP + phosphate + H(+). It participates in cell wall biogenesis; peptidoglycan biosynthesis. Cell wall formation. This is D-alanine--D-alanine ligase from Novosphingobium aromaticivorans (strain ATCC 700278 / DSM 12444 / CCUG 56034 / CIP 105152 / NBRC 16084 / F199).